The chain runs to 161 residues: Calcium-binding protein CML24 (161 aa).

4 EF-hand domains span residues 13–48 (GSMDDIKKVFQRFDKNGDGKISVDELKEVIRALSPT), 49–84 (ASPEETVTMMKQFDLDGNGFIDLDEFVALFQIGIGG), 90–125 (NDVSDLKEAFELYDLDGNGRISAKELHSVMKNLGEK), and 126–161 (CSVQDCKKMISKVDIDGDGCVNFDEFKKMMSNGGGA). Positions 26, 28, 30, 32, 37, 62, 64, 66, 73, 103, 105, 107, 109, 114, 139, 141, 143, 145, and 150 each coordinate Ca(2+).

Expressed in seed coat, seedling radical, cotyledons, hypocotyl, shoot apex and elongating root. Expressed in the vasculature of cotyledons, leaves and roots. Highly expressed in guard cells, trichomes and hydathodes. Expressed in inflorescence stem branch points, silique abscission zone, young and mature styles and stigmatic papillae, mature anthers and developing seed.

Functionally, calcium-binding protein that may positively regulate abscisic acid (ABA) inhibition of germination and seedling development. May be required for photoperiod-induced flowering and function in ion homeostasis. The polypeptide is Calcium-binding protein CML24 (CML24) (Arabidopsis thaliana (Mouse-ear cress)).